The following is a 243-amino-acid chain: tRNA pseudouridine synthase A (243 aa).

Asp54 (nucleophile) is an active-site residue. Residue Tyr112 participates in substrate binding.

This sequence belongs to the tRNA pseudouridine synthase TruA family. As to quaternary structure, homodimer.

The enzyme catalyses uridine(38/39/40) in tRNA = pseudouridine(38/39/40) in tRNA. Its function is as follows. Formation of pseudouridine at positions 38, 39 and 40 in the anticodon stem and loop of transfer RNAs. This Aster yellows witches'-broom phytoplasma (strain AYWB) protein is tRNA pseudouridine synthase A.